Reading from the N-terminus, the 627-residue chain is Carnitine O-acetyltransferase, mitochondrial (627 aa).

Residue His-336 is the Proton acceptor of the active site. Residues Lys-418 and 422-429 (KKFKVSPD) contribute to the CoA site. Residues Tyr-451, Ser-453, and Thr-464 each coordinate (R)-carnitine. CoA is bound at residue Gln-553. The Microbody targeting signal motif lies at 625–627 (PKL).

This sequence belongs to the carnitine/choline acetyltransferase family.

It is found in the peroxisome. Its subcellular location is the mitochondrion inner membrane. It carries out the reaction (R)-carnitine + acetyl-CoA = O-acetyl-(R)-carnitine + CoA. In terms of biological role, carnitine acetylase is specific for short chain fatty acids. Carnitine acetylase seems to affect the flux through the pyruvate dehydrogenase complex. It may be involved as well in the transport of acetyl-CoA into mitochondria. This is Carnitine O-acetyltransferase, mitochondrial (CAT2) from Candida tropicalis (Yeast).